A 577-amino-acid chain; its full sequence is MNIQALLSEKVSQALIAAGAPADCEPQVRQSAKVQFGDYQANGVMAVAKKLGMAPRQLAEQVLSHLDLNGIANKVEIAGPGFINIFLDPAFLADNVNRALQSERLGVTKPQAQTIVVDYSAPNVAKEMHVGHLRSTIIGDASVRTLEFLGHKVIRANHVGDWGTQFGMLIAYLEKQQQENAGEMALADLEGFYREAKKHYDEDEAFAERARSYVVKLQGGDQYFLQMWRKLVDITMSQNQITYDRLNVTLTRDDVMGESLYNPMLPGIVADLKAKGLAVESEGATVVFLDEYKNKEGEPMGVIIQKKDGGYLYTTTDIACAKYRYETLHADRVLYYIDSRQHQHLMQAWTIVRKAGYVPDSVPLEHHMFGMMLGKDGKPFKTRAGGTVKLADLLDEALERARRLVAEKNPDMSADELENLAKVVGIGAVKYADLSKNRTTDYVFDWDNMLAFEGNTAPYMQYAYTRVLSVFRKAGIDENAMNDAPVVIAEDREAQLAARLLQFEETLSVVAREGTPHVMCAYLYDLAGLFSGFYEHCPILSAESEETRNSRLKLALLTAKTLKLGLDTLGIETVERM.

A 'HIGH' region motif is present at residues 122–132; sequence PNVAKEMHVGH.

Belongs to the class-I aminoacyl-tRNA synthetase family. As to quaternary structure, monomer.

The protein localises to the cytoplasm. It carries out the reaction tRNA(Arg) + L-arginine + ATP = L-arginyl-tRNA(Arg) + AMP + diphosphate. The chain is Arginine--tRNA ligase from Klebsiella pneumoniae (strain 342).